We begin with the raw amino-acid sequence, 592 residues long: Probable auxin efflux carrier component 1c (592 aa).

At M1–D6 the chain is on the extracellular side. A helical membrane pass occupies residues F7 to S27. The Cytoplasmic portion of the chain corresponds to V28–Q38. A helical membrane pass occupies residues C39–I59. (indol-3-yl)acetate is bound at residue V51. Topologically, residues S60–R70 are extracellular. Residues F71–H91 traverse the membrane as a helical segment. Residues L92–W100 lie on the Cytoplasmic side of the membrane. Residues T101–L121 form a helical membrane-spanning segment. The (indol-3-yl)acetate site is built by N112 and L114. Over K122–S131 the chain is Extracellular. A helical membrane pass occupies residues L132 to F152. Y145 serves as a coordination point for (indol-3-yl)acetate. Topologically, residues E153–S452 are cytoplasmic. Disordered stretches follow at residues R214–T236 and G282–E331. A compositionally biased stretch (polar residues) spans G224 to T236. Over residues A309–P318 the composition is skewed to pro residues. A helical membrane pass occupies residues L453 to I473. Topologically, residues L474–S476 are extracellular. A helical transmembrane segment spans residues I477 to A497. Topologically, residues L498 to T511 are cytoplasmic. The chain crosses the membrane as a helical span at residues F512–V532. Topologically, residues G533–T537 are extracellular. Residues L538–A558 traverse the membrane as a helical segment. (indol-3-yl)acetate contacts are provided by I552 and V553. At K559 to A571 the chain is on the cytoplasmic side. Residues V572–L592 form a helical membrane-spanning segment.

This sequence belongs to the auxin efflux carrier (TC 2.A.69.1) family. In terms of assembly, homodimer. Expressed at low levels in roots and leaves. Expressed in roots, stem bases, stems, leaves and young panicles.

The protein localises to the membrane. May act as a component of the auxin efflux carrier. This is Probable auxin efflux carrier component 1c from Oryza sativa subsp. japonica (Rice).